The primary structure comprises 652 residues: Engulfment and cell motility protein 3 (652 aa).

An ELMO domain is found at 307–479 (EQREQLQALR…VVREQLARTL (173 aa)).

In terms of assembly, probably interacts directly with the SH3-domain of DOCK1 via its SH3-binding site. Part of a complex with DOCK1 and RAC1. Interacts with ADGRB3.

It is found in the cytoplasm. In terms of biological role, involved in cytoskeletal rearrangements required for phagocytosis of apoptotic cells and cell motility. Acts in association with DOCK1 and CRK. Was initially proposed to be required in complex with DOCK1 to activate Rac Rho small GTPases. May enhance the guanine nucleotide exchange factor (GEF) activity of DOCK1. In Bos taurus (Bovine), this protein is Engulfment and cell motility protein 3 (ELMO3).